Here is a 396-residue protein sequence, read N- to C-terminus: Phosphopentomutase (396 aa).

Residues Asp-14, Asp-286, His-291, Asp-327, His-328, and His-339 each contribute to the Mn(2+) site.

This sequence belongs to the phosphopentomutase family. It depends on Mn(2+) as a cofactor.

Its subcellular location is the cytoplasm. It catalyses the reaction 2-deoxy-alpha-D-ribose 1-phosphate = 2-deoxy-D-ribose 5-phosphate. The enzyme catalyses alpha-D-ribose 1-phosphate = D-ribose 5-phosphate. The protein operates within carbohydrate degradation; 2-deoxy-D-ribose 1-phosphate degradation; D-glyceraldehyde 3-phosphate and acetaldehyde from 2-deoxy-alpha-D-ribose 1-phosphate: step 1/2. Its function is as follows. Isomerase that catalyzes the conversion of deoxy-ribose 1-phosphate (dRib-1-P) and ribose 1-phosphate (Rib-1-P) to deoxy-ribose 5-phosphate (dRib-5-P) and ribose 5-phosphate (Rib-5-P), respectively. This is Phosphopentomutase from Staphylococcus carnosus (strain TM300).